A 133-amino-acid polypeptide reads, in one-letter code: Holo-[acyl-carrier-protein] synthase (133 aa).

Positions 8 and 56 each coordinate Mg(2+).

It belongs to the P-Pant transferase superfamily. AcpS family. Requires Mg(2+) as cofactor.

It localises to the cytoplasm. It carries out the reaction apo-[ACP] + CoA = holo-[ACP] + adenosine 3',5'-bisphosphate + H(+). Its function is as follows. Transfers the 4'-phosphopantetheine moiety from coenzyme A to a Ser of acyl-carrier-protein. This Clostridium perfringens (strain SM101 / Type A) protein is Holo-[acyl-carrier-protein] synthase.